We begin with the raw amino-acid sequence, 260 residues long: Thrombin-like enzyme bhalternin (260 aa).

An N-terminal signal peptide occupies residues 1 to 18; the sequence is MVLIRVLANLLILQLSYA. Residues 19–24 constitute a propeptide that is removed on maturation; it reads QKASEL. The Peptidase S1 domain maps to 25–251; it reads VIGGDECNIN…YSEWIQSIIA (227 aa). 5 cysteine pairs are disulfide-bonded: Cys31-Cys165, Cys50-Cys66, Cys144-Cys212, Cys176-Cys191, and Cys202-Cys227. A glycan (N-linked (GlcNAc...) asparagine) is linked at Asn44. Residue Asn81 is glycosylated (N-linked (GlcNAc...) asparagine).

It belongs to the peptidase S1 family. Snake venom subfamily. In terms of assembly, monomer. In terms of tissue distribution, expressed by the venom gland.

It localises to the secreted. Inhibited by benzamidine and partially inhibited by EDTA. In terms of biological role, thrombin-like snake venom serine protease that induces blood clotting in vitro, defibrinogenation in vivo (by intraperitoneal injection into mice), albuminolytic and fibrinogenolytic activities. Preferentially cleaves the alpha chain of fibrinogen (FGA). Causes hemolysis in the heart, causes apparent hyperemia and lymphocytic interstitial pneumonitis in the lung, causes necrosis and inflammatory infiltrate in the liver, and causes glomerular congestion in the kidney. Also provokes a drastic myonecrosis. This is Thrombin-like enzyme bhalternin from Bothrops alternatus (Urutu).